A 149-amino-acid polypeptide reads, in one-letter code: Transcription factor bHLH153 (149 aa).

Positions 27–76 (RHKSDLSFSSKERKDKVGERISALQQIVSPYGKTDTASVLLDAMHYIEFL) constitute a bHLH domain.

It belongs to the bHLH protein family.

Its subcellular location is the nucleus. This Arabidopsis thaliana (Mouse-ear cress) protein is Transcription factor bHLH153.